A 475-amino-acid polypeptide reads, in one-letter code: MVVHITTDNDIGVRITLRRMLLLTLVTYIVYIAYNQRDILHINRLAVLALSFVAYLAWESIGIQYSNFTLLNDWFQYTPGNAPIVLLLIILVITLLVYLTTTQRYITPNKWIALLMLVNLIGLILFPMVNDLIPLYVIIELQSYSLYLLTGVYNKSYNATRAAILYFVTGGIASVLILLSSAEVYEATGLTNLSEISTYYSISGINTWTSFDILLIALVFKMGLAPLHAWSISVYSYAPLYITAYISIVAKVSIMSFIYLNIHLFSTQLLILAFYLSVAVAAYTPLYQVNIKSILAYSGILNFGYLLTAVLTNDNAYYIYIIQYSLTHVTIFLCILAITEYTNKPASYWSPIVNVNQLVVPNKALCIALIVCLFSLIGIPPLPGFYGKYYIIVGLMSNGLNLEALTIIVFSVIATYYYAYIIKQLASNLYNNNTNVIATPINSTLGFIISILMVILITFYMYLPTLLDGLTLLHS.

A run of 13 helical transmembrane segments spans residues 45-65 (LAVLALSFVAYLAWESIGIQY), 82-102 (APIVLLLIILVITLLVYLTTT), 112-132 (IALLMLVNLIGLILFPMVNDL), 133-153 (IPLYVIIELQSYSLYLLTGVY), 162-182 (AAILYFVTGGIASVLILLSSA), 198-220 (TYYSISGINTWTSFDILLIALVF), 240-260 (LYITAYISIVAKVSIMSFIYL), 262-282 (IHLFSTQLLILAFYLSVAVAA), 291-311 (IKSILAYSGILNFGYLLTAVL), 318-338 (YIYIIQYSLTHVTIFLCILAI), 365-385 (LCIALIVCLFSLIGIPPLPGF), 402-422 (LEALTIIVFSVIATYYYAYII), and 447-467 (FIISILMVILITFYMYLPTLL).

Belongs to the complex I subunit 2 family.

The protein resides in the mitochondrion inner membrane. It catalyses the reaction a ubiquinone + NADH + 5 H(+)(in) = a ubiquinol + NAD(+) + 4 H(+)(out). Functionally, core subunit of the mitochondrial membrane respiratory chain NADH dehydrogenase (Complex I) that is believed to belong to the minimal assembly required for catalysis. Complex I functions in the transfer of electrons from NADH to the respiratory chain. The immediate electron acceptor for the enzyme is believed to be ubiquinone. The chain is NADH-ubiquinone oxidoreductase chain 2 (NAD2) from Candida albicans (strain SC5314 / ATCC MYA-2876) (Yeast).